The sequence spans 387 residues: Sialic acid-binding Ig-like lectin 13 (387 aa).

Positions 1–15 are cleaved as a signal peptide; it reads MLPLLLPLLWAGALA. The Ig-like V-type domain occupies 16-138; it reads LEGIFQLEVP…KDPPLSVHVT (123 aa). The Extracellular segment spans residues 16 to 341; sequence LEGIFQLEVP…QRKSGPMAEV (326 aa). Cystine bridges form between C35–C168, C40–C100, and C162–C211. N-linked (GlcNAc...) asparagine glycosylation is present at N99. Residue R118 coordinates N-acetylneuraminate. In terms of domain architecture, Ig-like C2-type 1 spans 144–227; that stretch reads PDILIPGALK…AGVTTTRTVR (84 aa). Residues N229, N236, and N254 are each glycosylated (N-linked (GlcNAc...) asparagine). The region spanning 234-326 is the Ig-like C2-type 2 domain; the sequence is PQNLTLTVFQ…RNPLGSQQVS (93 aa). A disulfide bridge links C270 with C314. The helical transmembrane segment at 342–362 threads the bilayer; that stretch reads VLVAIGEAAVKILLLFLCLII. Topologically, residues 363 to 387 are cytoplasmic; that stretch reads LRVKSHRRKAAKAATGVEAAKVVKG.

It belongs to the immunoglobulin superfamily. SIGLEC (sialic acid binding Ig-like lectin) family.

It is found in the membrane. Putative adhesion molecule that mediates sialic-acid dependent binding to cells. The chain is Sialic acid-binding Ig-like lectin 13 (SIGLEC13) from Pan troglodytes (Chimpanzee).